The following is a 370-amino-acid chain: Peptidoglycan glycosyltransferase MrdB (370 aa).

9 helical membrane passes run 20-40, 50-70, 75-95, 136-156, 160-180, 183-203, 263-283, 312-332, and 336-356; these read MLLILLALLVYSALVIWSASG, IGQIAMGLVIMVVMAQIPPRV, APYLYIICIILLVAVDAFGAI, SLKNTGIALVLIFMPTLLVAA, LGTSILVALSGLFVLFLSGLS, LIGVAVVLVAAFIPILWFFLM, FIFAVLAEELGLVGILILLAL, LILFVYVFVNIGMVSGILPVV, and LPLVSYGGSALIVLMAGFGIV.

The protein belongs to the SEDS family. MrdB/RodA subfamily.

The protein localises to the cell inner membrane. The enzyme catalyses [GlcNAc-(1-&gt;4)-Mur2Ac(oyl-L-Ala-gamma-D-Glu-L-Lys-D-Ala-D-Ala)](n)-di-trans,octa-cis-undecaprenyl diphosphate + beta-D-GlcNAc-(1-&gt;4)-Mur2Ac(oyl-L-Ala-gamma-D-Glu-L-Lys-D-Ala-D-Ala)-di-trans,octa-cis-undecaprenyl diphosphate = [GlcNAc-(1-&gt;4)-Mur2Ac(oyl-L-Ala-gamma-D-Glu-L-Lys-D-Ala-D-Ala)](n+1)-di-trans,octa-cis-undecaprenyl diphosphate + di-trans,octa-cis-undecaprenyl diphosphate + H(+). It functions in the pathway cell wall biogenesis; peptidoglycan biosynthesis. Its function is as follows. Peptidoglycan polymerase that is essential for cell wall elongation. The chain is Peptidoglycan glycosyltransferase MrdB from Escherichia coli O157:H7.